The chain runs to 603 residues: Podocalyxin-like protein 2 (603 aa).

Residues M1–A28 form the signal peptide. The Extracellular portion of the chain corresponds to V29–T499. Residues F53–Q92 form a disordered region. O-linked (Xyl...) (chondroitin sulfate) serine glycosylation is present at S75. Residue Y93 is modified to Sulfotyrosine. An N-linked (GlcNAc...) asparagine glycan is attached at N101. Y113 carries the post-translational modification Sulfotyrosine. The tract at residues S124 to S368 is disordered. The span at Q156–L187 shows a compositional bias: acidic residues. A compositionally biased stretch (low complexity) spans A196 to P216. 3 stretches are compositionally biased toward polar residues: residues V240 to G266, A302 to P314, and D339 to W349. An N-linked (GlcNAc...) asparagine glycan is attached at N260. An N-linked (GlcNAc...) asparagine glycan is attached at N394. Residues L500–L520 traverse the membrane as a helical segment. Residues Y521–L603 are Cytoplasmic-facing. The segment covering D558 to L570 has biased composition (polar residues). The disordered stretch occupies residues D558–L603. S569 and S594 each carry phosphoserine. Residues E592–L603 are compositionally biased toward acidic residues.

It belongs to the podocalyxin family. As to quaternary structure, homodimer; disulfide-linked. Interacts with SELL, SELE and SELP. In terms of processing, glycosylated; contains chondroitin sulfate. Displays sialylated O-linked oligosaccharides. Sulfation is necessary for interaction with SELL. Sialylated O-linked oligosaccharides are necessary for interaction with SELL, SELE and SELP.

The protein localises to the membrane. Acts as a ligand for vascular selectins. Mediates rapid rolling of leukocytes over vascular surfaces through high affinity divalent cation-dependent interactions with E-, P- and L-selectins. This Mus musculus (Mouse) protein is Podocalyxin-like protein 2 (Podxl2).